The sequence spans 638 residues: Chaperone protein DnaK (638 aa).

Position 197 is a phosphothreonine; by autocatalysis (Thr-197). Positions 600–638 (SGAQGGAQAGPGAGAGQQANQGSSNNKEDIQDADFEEVK) are disordered. Over residues 602 to 614 (AQGGAQAGPGAGA) the composition is skewed to gly residues. The segment covering 615–624 (GQQANQGSSN) has biased composition (low complexity). Basic and acidic residues predominate over residues 625-638 (NKEDIQDADFEEVK).

It belongs to the heat shock protein 70 family.

In terms of biological role, acts as a chaperone. The protein is Chaperone protein DnaK of Phocaeicola vulgatus (strain ATCC 8482 / DSM 1447 / JCM 5826 / CCUG 4940 / NBRC 14291 / NCTC 11154) (Bacteroides vulgatus).